We begin with the raw amino-acid sequence, 338 residues long: Lipoate-protein ligase A (338 aa).

The BPL/LPL catalytic domain occupies 29-216 (PATQRVLFLW…AFFSHYGERV (188 aa)). Residues arginine 71, 76 to 79 (GAVF), and lysine 134 each bind ATP. Lysine 134 is a (R)-lipoate binding site.

The protein belongs to the LplA family. In terms of assembly, monomer.

Its subcellular location is the cytoplasm. It catalyses the reaction L-lysyl-[lipoyl-carrier protein] + (R)-lipoate + ATP = N(6)-[(R)-lipoyl]-L-lysyl-[lipoyl-carrier protein] + AMP + diphosphate + H(+). Its pathway is protein modification; protein lipoylation via exogenous pathway; protein N(6)-(lipoyl)lysine from lipoate: step 1/2. The protein operates within protein modification; protein lipoylation via exogenous pathway; protein N(6)-(lipoyl)lysine from lipoate: step 2/2. Functionally, catalyzes both the ATP-dependent activation of exogenously supplied lipoate to lipoyl-AMP and the transfer of the activated lipoyl onto the lipoyl domains of lipoate-dependent enzymes. The protein is Lipoate-protein ligase A of Klebsiella pneumoniae subsp. pneumoniae (strain ATCC 700721 / MGH 78578).